Here is a 186-residue protein sequence, read N- to C-terminus: Ribosome-recycling factor (186 aa).

This sequence belongs to the RRF family.

The protein localises to the cytoplasm. In terms of biological role, responsible for the release of ribosomes from messenger RNA at the termination of protein biosynthesis. May increase the efficiency of translation by recycling ribosomes from one round of translation to another. This is Ribosome-recycling factor from Bartonella bacilliformis (strain ATCC 35685 / KC583 / Herrer 020/F12,63).